The following is a 1721-amino-acid chain: Ras guanine nucleotide exchange factor R (1721 aa).

Residues 148 to 279 (QLEDEVDLVH…LQQQQQQQRS (132 aa)) adopt a coiled-coil conformation. 6 disordered regions span residues 213 to 232 (QQQKHQEEKEKNDQKEKEEK), 445 to 515 (SSLG…NQQP), 551 to 701 (ATTT…VDKQ), 716 to 766 (RTPL…KSPS), 797 to 837 (TITI…TPNK), and 929 to 981 (DEVS…DPVS). Residues 216-232 (KHQEEKEKNDQKEKEEK) are compositionally biased toward basic and acidic residues. Composition is skewed to low complexity over residues 454-469 (SPEKSISPSFTSSTSE), 479-493 (HNNNNNNYNNSSTNN), 501-515 (PSLSSNHSQQPNQQP), and 551-581 (ATTTTTTATSPSTSTSTSTSTSPNSSSLSIS). Residues 618–627 (NGTTSPRNNE) show a composition bias toward polar residues. 2 stretches are compositionally biased toward low complexity: residues 628 to 651 (SSVTAATTTTTSTTASITTNVNTI) and 663 to 686 (TPTTGTPSTSTPTPQTPTSTSQND). Basic and acidic residues predominate over residues 687-701 (KQNENNNKENFVDKQ). 3 stretches are compositionally biased toward low complexity: residues 724 to 748 (SSNSSSPSNNSNTTNSSSHSSTNSS), 797 to 836 (TITINNNNNNNNNNNNNNNNNNNNIQQQQQQQQQIPTTPN), and 933 to 952 (ESSSSSSSSTTSPNNINTPS). A coiled-coil region spans residues 802–831 (NNNNNNNNNNNNNNNNNNNIQQQQQQQQQI). Polar residues predominate over residues 968–978 (NLSSINNSSYD). Positions 1291-1411 (GRYVPKAGTL…ILGGLIKKKE (121 aa)) constitute an N-terminal Ras-GEF domain. One can recognise a Ras-GEF domain in the interval 1447–1676 (NESEIARQLT…YQLSLIREPR (230 aa)).

Post-translationally, phosphorylated on threonine residues.

Promotes the exchange of Ras-bound GDP by GTP. May also play a role in the activation of rasG. The chain is Ras guanine nucleotide exchange factor R (gefR) from Dictyostelium discoideum (Social amoeba).